We begin with the raw amino-acid sequence, 878 residues long: Phosphoenolpyruvate carboxylase (878 aa).

Catalysis depends on residues His-138 and Lys-545.

The protein belongs to the PEPCase type 1 family. The cofactor is Mg(2+).

It carries out the reaction oxaloacetate + phosphate = phosphoenolpyruvate + hydrogencarbonate. Functionally, forms oxaloacetate, a four-carbon dicarboxylic acid source for the tricarboxylic acid cycle. In Shewanella loihica (strain ATCC BAA-1088 / PV-4), this protein is Phosphoenolpyruvate carboxylase.